Here is a 729-residue protein sequence, read N- to C-terminus: Anti-bacteriophage protein B (729 aa).

One can recognise a Helicase ATP-binding domain in the interval 109-271; the sequence is FDLLKSGQNV…KLGYPHTFVS (163 aa). 122–129 contacts ATP; the sequence is APTSMGKS. Positions 297–472 constitute a Helicase C-terminal domain; the sequence is ALGEIAHACV…GIDTPINLLA (176 aa).

Belongs to the helicase family. Interacts with AbpB.

Its function is as follows. Part of an antiviral system composed of AbpA and AbpB; when both are expressed from a plasmid they confer resistance to phages T2, T4, T7 and lambda but not RB32 or RB69. Resistance is temperature dependent, it can be seen at 30 degrees Celsius but not at 37 or 42 degrees Celsius. The system impairs phage but not bacterial DNA synthesis (shown for T4, T7 and lambda). Partially suppressed by mutations in T4 gene 41, a replicative helicase. Deletion or mutations in this gene were selected in directed evolution experiments for resistance to intense ionizing radiation (3000 Gy). The protein is Anti-bacteriophage protein B of Escherichia coli (strain K12).